The following is a 1141-amino-acid chain: MAASRSASRISFAKIIEPLEVPDLLALQTQSFDWLIGNDIWAERVQEAIDADRNDVPITSGLEEVFEEISPIEDFSGSMSLSFRDHRFEPPKYSVEECKDKDMTYSAPLFVTAEFTNNTTGEIKSQTVFMGDFPLMTPKGTFVINGTERVVVSQLVRSPGVYFEKAIDKASDKDLFSCKVIPSRGAWLEFEIDKRDTVGVRIDRKRRQSVTVLLKALGWDEARILERFGDFPSMRVTLEKDHTSSQDDALLDIYRKLRPGEPPTRESAQTLLENLFFNPKRYDLAKVGRYKVNKKLTLEVAHDVGVLTEDDVVRTIEYIVKLHAGQDPDNYEVDDIDHFGNRRLRTVGELIQNQVRLGLARMERVVRERMTTQDVEAITPQTLINIRPVVASIKEFFGTSQLSQFMDQTNPLAGLTHKRRLSALGPGGLSRERAGFEVRDVHPSHYGRMCPIETPEGPNIGLIGSLSTFARVNPFGFVETPYRKVENGRVTGQIDYLTADEEDRHVKAQANTPLNADGTFAEDRVLVRRKGGEVEFIPPDEVDYMDVSPRQMVSVATAMIPFLEHDDANRALMGSNMQRQSVPLLRSEAPLVGTGMEARAAKDAGDVVVCAQSGVVEDLSADYITVMHDDGTRRTYRLAKFRRSNQGTCINQKPIVFEGDRVEAGQVIADGPCTDNGEMALGKNLLVAFMPWEGHNYEDAIILSQRLVQDDVLSSIHIEEHEVDARDTKLGPEEITRDIPNVAEEVLADLDERGIIRIGAEVSPGDVLVGKVTPKGETELTPEERLLRAIFGEKAREVRDTSLKVPHGESGKVIGVRVFSREDGDELPPGVNELVRVYVAQKRKITDGDKLAGRHGNKGVIAKILPVEDMPFLPDGTAVDVVLNPHGVPRRMNIGQILETHLGWVAKTGWQVDSGAEGWKERLRGIGADAAPPGTNVATPVFDGAREEEITGLLDATLPNRDGQQMIGSSGKAELYDGRTGEPYPYPVAVGYIYILKLLHLVDDKIHARSTGPYSMITQQPLGGKAQFGGQRFGEMEVWALEAYGAAYALQELLTIKSDDVVGRVKVYEAIVKGENIPEPGIPESFKVLIKEMQSLCLNVEVLSSDGVSIEMRDTDEDVFRAAEELGIDLSRREPSSVEEV.

This sequence belongs to the RNA polymerase beta chain family. In terms of assembly, the RNAP catalytic core consists of 2 alpha, 1 beta, 1 beta' and 1 omega subunit. When a sigma factor is associated with the core the holoenzyme is formed, which can initiate transcription.

It catalyses the reaction RNA(n) + a ribonucleoside 5'-triphosphate = RNA(n+1) + diphosphate. In terms of biological role, DNA-dependent RNA polymerase catalyzes the transcription of DNA into RNA using the four ribonucleoside triphosphates as substrates. This chain is DNA-directed RNA polymerase subunit beta, found in Parafrankia sp. (strain EAN1pec).